Reading from the N-terminus, the 264-residue chain is Thiazole synthase (264 aa).

K106 serves as the catalytic Schiff-base intermediate with DXP. 1-deoxy-D-xylulose 5-phosphate-binding positions include G167, 193 to 194 (AG), and 215 to 216 (NS).

The protein belongs to the ThiG family. Homotetramer. Forms heterodimers with either ThiH or ThiS.

It is found in the cytoplasm. It catalyses the reaction [ThiS sulfur-carrier protein]-C-terminal-Gly-aminoethanethioate + 2-iminoacetate + 1-deoxy-D-xylulose 5-phosphate = [ThiS sulfur-carrier protein]-C-terminal Gly-Gly + 2-[(2R,5Z)-2-carboxy-4-methylthiazol-5(2H)-ylidene]ethyl phosphate + 2 H2O + H(+). Its pathway is cofactor biosynthesis; thiamine diphosphate biosynthesis. Catalyzes the rearrangement of 1-deoxy-D-xylulose 5-phosphate (DXP) to produce the thiazole phosphate moiety of thiamine. Sulfur is provided by the thiocarboxylate moiety of the carrier protein ThiS. In vitro, sulfur can be provided by H(2)S. In Stutzerimonas stutzeri (strain A1501) (Pseudomonas stutzeri), this protein is Thiazole synthase.